Consider the following 166-residue polypeptide: Interferon gamma (166 aa).

Positions 1–23 are cleaved as a signal peptide; that stretch reads MNYTSYILAFQLCVILGSSGCYC. Position 24 is a pyrrolidone carboxylic acid (Q24). N39 and N106 each carry an N-linked (GlcNAc...) asparagine glycan.

It belongs to the type II (or gamma) interferon family. As to quaternary structure, homodimer. Interacts with IFNGR1 (via extracellular domain); this interaction promotes IFNGR1 dimerization. As to expression, released primarily from activated T lymphocytes.

The protein localises to the secreted. Type II interferon produced by immune cells such as T-cells and NK cells that plays crucial roles in antimicrobial, antiviral, and antitumor responses by activating effector immune cells and enhancing antigen presentation. Primarily signals through the JAK-STAT pathway after interaction with its receptor IFNGR1 to affect gene regulation. Upon IFNG binding, IFNGR1 intracellular domain opens out to allow association of downstream signaling components JAK2, JAK1 and STAT1, leading to STAT1 activation, nuclear translocation and transcription of IFNG-regulated genes. Many of the induced genes are transcription factors such as IRF1 that are able to further drive regulation of a next wave of transcription. Plays a role in class I antigen presentation pathway by inducing a replacement of catalytic proteasome subunits with immunoproteasome subunits. In turn, increases the quantity, quality, and repertoire of peptides for class I MHC loading. Increases the efficiency of peptide generation also by inducing the expression of activator PA28 that associates with the proteasome and alters its proteolytic cleavage preference. Up-regulates as well MHC II complexes on the cell surface by promoting expression of several key molecules such as cathepsins B/CTSB, H/CTSH, and L/CTSL. Participates in the regulation of hematopoietic stem cells during development and under homeostatic conditions by affecting their development, quiescence, and differentiation. The polypeptide is Interferon gamma (IFNG) (Camelus bactrianus (Bactrian camel)).